We begin with the raw amino-acid sequence, 379 residues long: Queuine tRNA-ribosyltransferase (379 aa).

The active-site Proton acceptor is Asp-94. Residues 94–98, Asp-148, Gln-191, and Gly-218 each bind substrate; that span reads DSGGF. The interval 249–255 is RNA binding; sequence GVGSPDS. Asp-268 functions as the Nucleophile in the catalytic mechanism. Positions 273 to 277 are RNA binding; important for wobble base 34 recognition; it reads TRIAR. Residues Cys-306, Cys-308, Cys-311, and His-337 each coordinate Zn(2+).

The protein belongs to the queuine tRNA-ribosyltransferase family. In terms of assembly, homodimer. Within each dimer, one monomer is responsible for RNA recognition and catalysis, while the other monomer binds to the replacement base PreQ1. The cofactor is Zn(2+).

The enzyme catalyses 7-aminomethyl-7-carbaguanine + guanosine(34) in tRNA = 7-aminomethyl-7-carbaguanosine(34) in tRNA + guanine. It participates in tRNA modification; tRNA-queuosine biosynthesis. Catalyzes the base-exchange of a guanine (G) residue with the queuine precursor 7-aminomethyl-7-deazaguanine (PreQ1) at position 34 (anticodon wobble position) in tRNAs with GU(N) anticodons (tRNA-Asp, -Asn, -His and -Tyr). Catalysis occurs through a double-displacement mechanism. The nucleophile active site attacks the C1' of nucleotide 34 to detach the guanine base from the RNA, forming a covalent enzyme-RNA intermediate. The proton acceptor active site deprotonates the incoming PreQ1, allowing a nucleophilic attack on the C1' of the ribose to form the product. After dissociation, two additional enzymatic reactions on the tRNA convert PreQ1 to queuine (Q), resulting in the hypermodified nucleoside queuosine (7-(((4,5-cis-dihydroxy-2-cyclopenten-1-yl)amino)methyl)-7-deazaguanosine). This chain is Queuine tRNA-ribosyltransferase, found in Listeria welshimeri serovar 6b (strain ATCC 35897 / DSM 20650 / CCUG 15529 / CIP 8149 / NCTC 11857 / SLCC 5334 / V8).